The following is a 188-amino-acid chain: Inactive cysteine S-methyltransferase OspZ (188 aa).

Belongs to the NleE/OspZ family.

The protein resides in the secreted. It localises to the host cytoplasm. Its subcellular location is the host nucleus. In terms of biological role, inactive effector protein: in contrast to other members of the family, does not have the ability to inhibit host cell NF-kappa-B activation. Probably lacks cysteine S-methyltransferase activity due to its inability to bind S-adenosyl-L-methionine at the C-terminus. The sequence is that of Inactive cysteine S-methyltransferase OspZ from Shigella flexneri.